A 203-amino-acid polypeptide reads, in one-letter code: FMN-dependent NADH:quinone oxidoreductase 5 (203 aa).

Residues S9, 15 to 17 (SAS), 95 to 98 (MYNF), and 139 to 142 (TSGG) each bind FMN.

This sequence belongs to the azoreductase type 1 family. In terms of assembly, homodimer. The cofactor is FMN.

It carries out the reaction 2 a quinone + NADH + H(+) = 2 a 1,4-benzosemiquinone + NAD(+). It catalyses the reaction N,N-dimethyl-1,4-phenylenediamine + anthranilate + 2 NAD(+) = 2-(4-dimethylaminophenyl)diazenylbenzoate + 2 NADH + 2 H(+). In terms of biological role, quinone reductase that provides resistance to thiol-specific stress caused by electrophilic quinones. Functionally, also exhibits azoreductase activity. Catalyzes the reductive cleavage of the azo bond in aromatic azo compounds to the corresponding amines. The polypeptide is FMN-dependent NADH:quinone oxidoreductase 5 (Pseudomonas fluorescens (strain ATCC BAA-477 / NRRL B-23932 / Pf-5)).